We begin with the raw amino-acid sequence, 562 residues long: Arginine--tRNA ligase (562 aa).

A 'HIGH' region motif is present at residues 121–131 (PNIAKPFSVGH).

This sequence belongs to the class-I aminoacyl-tRNA synthetase family. As to quaternary structure, monomer.

The protein resides in the cytoplasm. It carries out the reaction tRNA(Arg) + L-arginine + ATP = L-arginyl-tRNA(Arg) + AMP + diphosphate. The polypeptide is Arginine--tRNA ligase (Streptococcus suis (strain 98HAH33)).